The following is a 550-amino-acid chain: Proteasome-associated ATPase (550 aa).

Residues 9–48 (EELARRVASLSAQNERLAQILVEARSKIVGLQQQIDDLAQ) are a coiled coil. Position 233-238 (233-238 (GCGKTL)) interacts with ATP. The disordered stretch occupies residues 528–550 (KGEGKNPTPAKAIETPHNTGPYL). The tract at residues 549 to 550 (YL) is docks into pockets in the proteasome alpha-ring.

The protein belongs to the AAA ATPase family. As to quaternary structure, homohexamer. Assembles into a hexameric ring structure that caps the 20S proteasome core. Strongly interacts with the prokaryotic ubiquitin-like protein Pup through a hydrophobic interface; the interacting region of ARC lies in its N-terminal coiled-coil domain. There is one Pup binding site per ARC hexamer ring. Upon ATP-binding, the C-terminus of ARC interacts with the alpha-rings of the proteasome core, possibly by binding to the intersubunit pockets.

The protein operates within protein degradation; proteasomal Pup-dependent pathway. ATPase which is responsible for recognizing, binding, unfolding and translocation of pupylated proteins into the bacterial 20S proteasome core particle. May be essential for opening the gate of the 20S proteasome via an interaction with its C-terminus, thereby allowing substrate entry and access to the site of proteolysis. Thus, the C-termini of the proteasomal ATPase may function like a 'key in a lock' to induce gate opening and therefore regulate proteolysis. This is Proteasome-associated ATPase from Jonesia denitrificans (strain ATCC 14870 / DSM 20603 / BCRC 15368 / CIP 55.134 / JCM 11481 / NBRC 15587 / NCTC 10816 / Prevot 55134) (Listeria denitrificans).